The primary structure comprises 375 residues: tRNA-specific 2-thiouridylase MnmA (375 aa).

ATP-binding positions include 9–16 (AMSGGVDS) and leucine 35. Cysteine 105 serves as the catalytic Nucleophile. A disulfide bond links cysteine 105 and cysteine 201. Glycine 129 serves as a coordination point for ATP. Positions 151-153 (KNQ) are interaction with tRNA. Catalysis depends on cysteine 201, which acts as the Cysteine persulfide intermediate. Residues 307–308 (RY) are interaction with tRNA.

Belongs to the MnmA/TRMU family.

Its subcellular location is the cytoplasm. The enzyme catalyses S-sulfanyl-L-cysteinyl-[protein] + uridine(34) in tRNA + AH2 + ATP = 2-thiouridine(34) in tRNA + L-cysteinyl-[protein] + A + AMP + diphosphate + H(+). Functionally, catalyzes the 2-thiolation of uridine at the wobble position (U34) of tRNA, leading to the formation of s(2)U34. The protein is tRNA-specific 2-thiouridylase MnmA of Leptospira interrogans serogroup Icterohaemorrhagiae serovar Lai (strain 56601).